We begin with the raw amino-acid sequence, 479 residues long: Anaerobic nitric oxide reductase flavorubredoxin (479 aa).

Positions 30–210 are zinc metallo-hydrolase; it reads LRGSSYNSYL…PFSRLVTPKI (181 aa). Fe cation contacts are provided by histidine 79, glutamate 81, aspartate 83, histidine 147, aspartate 166, and histidine 227. Positions 254-393 constitute a Flavodoxin-like domain; that stretch reads ITIFYDTMSN…LCREHGREIA (140 aa). Residues 260-264 and 342-369 each bind FMN; these read TMSNN and AFGS…EMSL. A Rubredoxin-like domain is found at 423–474; the sequence is GPRMQCSVCQWIYDPAKGEPMQDVAPGTPWSEVPDNFLCPECSLGKDVFEEL. 4 residues coordinate Fe cation: cysteine 428, cysteine 431, cysteine 461, and cysteine 464.

In the N-terminal section; belongs to the zinc metallo-hydrolase group 3 family. Homotetramer. The cofactor is Fe cation. FMN is required as a cofactor.

Its subcellular location is the cytoplasm. Its pathway is nitrogen metabolism; nitric oxide reduction. Functionally, anaerobic nitric oxide reductase; uses NADH to detoxify nitric oxide (NO), protecting several 4Fe-4S NO-sensitive enzymes. Has at least 2 reductase partners, only one of which (NorW, flavorubredoxin reductase) has been identified. NO probably binds to the di-iron center; electrons enter from the NorW at rubredoxin and are transferred sequentially to the FMN center and the di-iron center. Also able to function as an aerobic oxygen reductase. In Escherichia coli O139:H28 (strain E24377A / ETEC), this protein is Anaerobic nitric oxide reductase flavorubredoxin.